Reading from the N-terminus, the 71-residue chain is UPF0346 protein str0441 (71 aa).

It belongs to the UPF0346 family.

The sequence is that of UPF0346 protein str0441 from Streptococcus thermophilus (strain CNRZ 1066).